The chain runs to 505 residues: Lysine--tRNA ligase (505 aa).

Glu409 and Glu416 together coordinate Mg(2+).

The protein belongs to the class-II aminoacyl-tRNA synthetase family. Homodimer. Mg(2+) serves as cofactor.

The protein resides in the cytoplasm. It carries out the reaction tRNA(Lys) + L-lysine + ATP = L-lysyl-tRNA(Lys) + AMP + diphosphate. This is Lysine--tRNA ligase from Latilactobacillus sakei subsp. sakei (strain 23K) (Lactobacillus sakei subsp. sakei).